The chain runs to 151 residues: Small ribosomal subunit protein eS6 (151 aa).

Belongs to the eukaryotic ribosomal protein eS6 family.

The chain is Small ribosomal subunit protein eS6 from Pyrobaculum calidifontis (strain DSM 21063 / JCM 11548 / VA1).